The following is a 907-amino-acid chain: Envelope glycoprotein B (907 aa).

Positions 1–24 (MESRIWCLVVCVNLCIVCLGAAVS) are cleaved as a signal peptide. Over 25-751 (SSSTRGTSAT…EGVATFLKNP (727 aa)) the chain is Virion surface. Positions 29-62 (RGTSATHSHHSSHTTSAAHSRSGSVSQRVTSSQT) are disordered. The span at 41-62 (HTTSAAHSRSGSVSQRVTSSQT) shows a compositional bias: low complexity. N-linked (GlcNAc...) asparagine; by host glycans are attached at residues Asn-68, Asn-73, and Asn-85. Cystine bridges form between Cys-94-Cys-551, Cys-111-Cys-507, Cys-185-Cys-250, and Cys-344-Cys-391. The segment at 152–158 (SYAYIHT) is involved in fusion and/or binding to host membrane. Asn-208 is a glycosylation site (N-linked (GlcNAc...) asparagine; by host). The segment at 237–244 (GSTWLYRE) is involved in fusion and/or binding to host membrane. Residues Asn-281, Asn-286, Asn-302, Asn-341, Asn-383, Asn-405, Asn-409, Asn-417, Asn-447, Asn-452, Asn-456, Asn-466, Asn-555, and Asn-586 are each glycosylated (N-linked (GlcNAc...) asparagine; by host). Cys-574 and Cys-611 are joined by a disulfide. The tract at residues 697–749 (VEDKVVDPLPPYLKGLDDLMSGLGAAGKAVGVAIGAVGGAVASVVEGVATFLK) is hydrophobic membrane proximal region. Residues 752-772 (FGAFTIILVAIAVVIITYLIY) traverse the membrane as a helical segment. Over 773–907 (TRQRRLCTQP…LKDSDEEENV (135 aa)) the chain is Intravirion. 2 stretches are compositionally biased toward polar residues: residues 798 to 810 (VTSGSTKDTSLQA) and 860 to 877 (RAQQNGTDSLDGRTGTQD). Disordered stretches follow at residues 798 to 838 (VTSG…TAAP) and 857 to 907 (AEQR…EENV). Residues 878–887 (KGQKPNLLDR) are compositionally biased toward basic and acidic residues. Positions 895-898 (YRHL) match the Internalization motif motif.

Belongs to the herpesviridae glycoprotein B family. Homotrimer; disulfide-linked. Binds to heparan sulfate proteoglycans. Interacts with gH/gL heterodimer. A proteolytic cleavage by host furin generates two subunits that remain linked by disulfide bonds.

It localises to the virion membrane. It is found in the host cell membrane. The protein localises to the host endosome membrane. The protein resides in the host Golgi apparatus membrane. In terms of biological role, envelope glycoprotein that forms spikes at the surface of virion envelope. Essential for the initial attachment to heparan sulfate moieties of the host cell surface proteoglycans. Involved in fusion of viral and cellular membranes leading to virus entry into the host cell. Following initial binding to its host receptors, membrane fusion is mediated by the fusion machinery composed at least of gB and the heterodimer gH/gL. May be involved in the fusion between the virion envelope and the outer nuclear membrane during virion egress. The chain is Envelope glycoprotein B from Human cytomegalovirus (strain Merlin) (HHV-5).